We begin with the raw amino-acid sequence, 284 residues long: ATP synthase gamma chain (284 aa).

Belongs to the ATPase gamma chain family. F-type ATPases have 2 components, CF(1) - the catalytic core - and CF(0) - the membrane proton channel. CF(1) has five subunits: alpha(3), beta(3), gamma(1), delta(1), epsilon(1). CF(0) has three main subunits: a, b and c.

It is found in the cell membrane. Produces ATP from ADP in the presence of a proton gradient across the membrane. The gamma chain is believed to be important in regulating ATPase activity and the flow of protons through the CF(0) complex. The polypeptide is ATP synthase gamma chain (Bacillus licheniformis (strain ATCC 14580 / DSM 13 / JCM 2505 / CCUG 7422 / NBRC 12200 / NCIMB 9375 / NCTC 10341 / NRRL NRS-1264 / Gibson 46)).